Reading from the N-terminus, the 203-residue chain is Thymidylate kinase (203 aa).

7 to 14 contacts ATP; the sequence is GGEGAGKT.

Belongs to the thymidylate kinase family.

It carries out the reaction dTMP + ATP = dTDP + ADP. Functionally, phosphorylation of dTMP to form dTDP in both de novo and salvage pathways of dTTP synthesis. This chain is Thymidylate kinase (tmk), found in Chlamydia trachomatis serovar D (strain ATCC VR-885 / DSM 19411 / UW-3/Cx).